The primary structure comprises 91 residues: LYR motif-containing protein 4 (91 aa).

Pantetheine 4'-phosphate contacts are provided by arginine 6 and lysine 44. N6-succinyllysine is present on lysine 47.

Belongs to the complex I LYR family. In terms of assembly, homodimer. Component of the mitochondrial core iron-sulfur cluster (ISC) complex composed of NFS1, LYRM4, NDUFAB1, ISCU, FXN, and FDX2; this complex is a heterohexamer containing two copies of each monomer. Component of the cyteine desulfurase complex composed of NFS1, LYRM4 and NDUFAB1; this complex contributes to the stability and cysteine desulfurase activity of NFS1. Interacts with FXN; this interaction is nickel-dependent. Interacts with the cytoplasmic form of NFS1; the complex increases the stability of NFS1. Forms a complex with the cytoplasmic form of NFS1; this complex increases the stability and cysteine desulfurase activity of NFS1. Interacts with NFS1.

It is found in the mitochondrion. Its subcellular location is the nucleus. It functions in the pathway cofactor biosynthesis; iron-sulfur cluster biosynthesis. Functionally, stabilizing factor, of the core iron-sulfur cluster (ISC) assembly complex, that regulates, in association with NDUFAB1, the stability and the cysteine desulfurase activity of NFS1 and participates in the [2Fe-2S] clusters assembly on the scaffolding protein ISCU. The core iron-sulfur cluster (ISC) assembly complex is involved in the de novo synthesis of a [2Fe-2S] cluster, the first step of the mitochondrial iron-sulfur protein biogenesis. This process is initiated by the cysteine desulfurase complex (NFS1:LYRM4:NDUFAB1) that produces persulfide which is delivered on the scaffold protein ISCU in a FXN-dependent manner. Then this complex is stabilized by FDX2 which provides reducing equivalents to accomplish the [2Fe-2S] cluster assembly. Finally, the [2Fe-2S] cluster is transferred from ISCU to chaperone proteins, including HSCB, HSPA9 and GLRX5. May also participates in the iron-sulfur protein biogenesis in the cytoplasm through its interaction with the cytoplasmic form of NFS1. In Bos taurus (Bovine), this protein is LYR motif-containing protein 4.